Consider the following 312-residue polypeptide: uncharacterized protein (312 aa).

The protein belongs to the asfivirus CP312R family.

It localises to the virion. This is an uncharacterized protein from African swine fever virus (strain Badajoz 1971 Vero-adapted) (Ba71V).